The following is a 492-amino-acid chain: MAKSKKKTDVVDSTNLPILELLSLKAPIFQSLLHPELPIIITGFGTGHIVCHRYDPAKLQSHLDRRRRIDTATTGKDAKKGVCPWIRLDIDLETGDLKLVDIEEQHQQKQTGKDEDLGVKTLWKTKRHKGSVRAMCFDSKGDNIFSVGSDNVLKKANTMTGKVVKKVNLSSLFNSEEKKNDKFTKLCASQTHPFILIGDESGNIHVINSENLALSNSIRSIHFGDSINDIFHFDKRSAYKFISLGQTTLAYFDVRDKDAKPNVAGNEDGKILISDDQEDEVLCGCFVDPEVADTLLCGMGEGIVTVWKPNKNDLEDQMSRIKISKDESIDCIVPTLQDDNCVWCGCSNGNIYKVNAKLGKVVEVRNHNELDEVSFVDLDFEYRVVSGGLENIKIWELSSDDVEENASVESDSDEPLSHSDEDLSDDTSSDDETTLVGLSKEELLDELDKDLKEDHQEEKESNSKSVKKRKIMKENNKKKDLYEHGIKKFDDL.

5 WD repeats span residues 127–166, 178–217, 236–274, 276–317, and 365–405; these read RHKGSVRAMCFDSKGDNIFSVGSDNVLKKANTMTGKVVKK, KKNDKFTKLCASQTHPFILIGDESGNIHVINSENLALSNS, RSAYKFISLGQTTLAYFDVRDKDAKPNVAGNEDGKILIS, DQED…LEDQ, and RNHN…VEEN. Acidic residues-rich tracts occupy residues 404-414 and 422-433; these read ENASVESDSDE and DLSDDTSSDDET. The tract at residues 404–472 is disordered; sequence ENASVESDSD…SKSVKKRKIM (69 aa). Basic and acidic residues predominate over residues 449 to 462; that stretch reads KDLKEDHQEEKESN.

Belongs to the WD repeat WDR55 family. In terms of assembly, interacts with BRE1, BUD27 and GIS1.

It is found in the nucleus. The protein localises to the nucleolus. This is WD repeat-containing protein JIP5 (JIP5) from Saccharomyces cerevisiae (strain YJM789) (Baker's yeast).